The sequence spans 569 residues: Urease subunit alpha (569 aa).

One can recognise a Urease domain in the interval 131-569 (GGFDSHIHFI…LPMAQRYFLF (439 aa)). Residues His136, His138, and Lys219 each contribute to the Ni(2+) site. Lys219 is subject to N6-carboxylysine. Substrate is bound at residue His221. Residues His248 and His274 each coordinate Ni(2+). His322 (proton donor) is an active-site residue. Asp362 serves as a coordination point for Ni(2+).

This sequence belongs to the metallo-dependent hydrolases superfamily. Urease alpha subunit family. In terms of assembly, heterotrimer of UreA (gamma), UreB (beta) and UreC (alpha) subunits. Three heterotrimers associate to form the active enzyme. It depends on Ni cation as a cofactor. Post-translationally, carboxylation allows a single lysine to coordinate two nickel ions.

The protein resides in the cytoplasm. The catalysed reaction is urea + 2 H2O + H(+) = hydrogencarbonate + 2 NH4(+). It participates in nitrogen metabolism; urea degradation; CO(2) and NH(3) from urea (urease route): step 1/1. The protein is Urease subunit alpha of Roseobacter denitrificans (strain ATCC 33942 / OCh 114) (Erythrobacter sp. (strain OCh 114)).